Here is a 249-residue protein sequence, read N- to C-terminus: Transcription repressor MYB5 (249 aa).

2 consecutive HTH myb-type domains span residues 20 to 72 and 73 to 127; these read KMGM…MNYL and RPSV…RKKL. 2 DNA-binding regions (H-T-H motif) span residues 48–72 and 100–123; these read WRSL…MNYL and WSLI…NTHL. Residues 133 to 180 form a disordered region; it reads DPQTHKPLDANNIHKPEEEVSGGQKYPLEPISSSHTDDTTVNGGDGDS. A compositionally biased stretch (basic and acidic residues) spans 135–150; that stretch reads QTHKPLDANNIHKPEE.

In terms of assembly, interacts with BHLH002/EGL3/MYC146, BHLH012/MYC1 and BHLH042/TT8. As to expression, siliques.

The protein resides in the nucleus. In terms of biological role, transcription activator, when associated with BHLH002/EGL3/MYC146, BHLH012/MYC1 or BHLH042/TT8. The polypeptide is Transcription repressor MYB5 (MYB5) (Arabidopsis thaliana (Mouse-ear cress)).